Reading from the N-terminus, the 490-residue chain is Protein nucleotidyltransferase YdiU (490 aa).

The ATP site is built by Gly-94, Gly-96, Arg-97, Lys-117, Asp-129, Gly-130, Arg-180, and Arg-187. Residue Asp-256 is the Proton acceptor of the active site. Residues Asn-257 and Asp-266 each coordinate Mg(2+). Position 266 (Asp-266) interacts with ATP.

The protein belongs to the SELO family. Requires Mg(2+) as cofactor. The cofactor is Mn(2+).

The catalysed reaction is L-seryl-[protein] + ATP = 3-O-(5'-adenylyl)-L-seryl-[protein] + diphosphate. It carries out the reaction L-threonyl-[protein] + ATP = 3-O-(5'-adenylyl)-L-threonyl-[protein] + diphosphate. The enzyme catalyses L-tyrosyl-[protein] + ATP = O-(5'-adenylyl)-L-tyrosyl-[protein] + diphosphate. It catalyses the reaction L-histidyl-[protein] + UTP = N(tele)-(5'-uridylyl)-L-histidyl-[protein] + diphosphate. The catalysed reaction is L-seryl-[protein] + UTP = O-(5'-uridylyl)-L-seryl-[protein] + diphosphate. It carries out the reaction L-tyrosyl-[protein] + UTP = O-(5'-uridylyl)-L-tyrosyl-[protein] + diphosphate. Its function is as follows. Nucleotidyltransferase involved in the post-translational modification of proteins. It can catalyze the addition of adenosine monophosphate (AMP) or uridine monophosphate (UMP) to a protein, resulting in modifications known as AMPylation and UMPylation. This chain is Protein nucleotidyltransferase YdiU, found in Clostridium perfringens (strain ATCC 13124 / DSM 756 / JCM 1290 / NCIMB 6125 / NCTC 8237 / Type A).